The primary structure comprises 144 residues: Transcription antitermination protein NusB (144 aa).

This sequence belongs to the NusB family.

Its function is as follows. Involved in transcription antitermination. Required for transcription of ribosomal RNA (rRNA) genes. Binds specifically to the boxA antiterminator sequence of the ribosomal RNA (rrn) operons. The sequence is that of Transcription antitermination protein NusB from Pelotomaculum thermopropionicum (strain DSM 13744 / JCM 10971 / SI).